The primary structure comprises 967 residues: Leucine--tRNA ligase (967 aa).

The 'HIGH' region signature appears at 43–53 (PYLSGHLHVGH). The 'KMSKS' region signature appears at 650 to 654 (KMSKS). Lysine 653 is an ATP binding site.

Belongs to the class-I aminoacyl-tRNA synthetase family.

It localises to the cytoplasm. It carries out the reaction tRNA(Leu) + L-leucine + ATP = L-leucyl-tRNA(Leu) + AMP + diphosphate. The chain is Leucine--tRNA ligase from Pyrococcus furiosus (strain ATCC 43587 / DSM 3638 / JCM 8422 / Vc1).